The sequence spans 130 residues: MARVTVEDCIDKVDNRFDLVLLAAHRARMISSGSQLTIDRDNDKNPVVSLREIAEQTVSPEDLREELVHSLQKFVEVDEPEQDTVPLIGSVGASVDADDTEVALERMTEEELLKGLEGLAPPEEQPEEDE.

The tract at residues 109–130 (EEELLKGLEGLAPPEEQPEEDE) is disordered.

The protein belongs to the RNA polymerase subunit omega family. The RNAP catalytic core consists of 2 alpha, 1 beta, 1 beta' and 1 omega subunit. When a sigma factor is associated with the core the holoenzyme is formed, which can initiate transcription.

It catalyses the reaction RNA(n) + a ribonucleoside 5'-triphosphate = RNA(n+1) + diphosphate. Its function is as follows. Promotes RNA polymerase assembly. Latches the N- and C-terminal regions of the beta' subunit thereby facilitating its interaction with the beta and alpha subunits. The polypeptide is DNA-directed RNA polymerase subunit omega (Rhodopseudomonas palustris (strain BisB5)).